The following is a 180-amino-acid chain: Large ribosomal subunit protein uL5 (180 aa).

Belongs to the universal ribosomal protein uL5 family. Part of the 50S ribosomal subunit; part of the 5S rRNA/L5/L18/L25 subcomplex. Contacts the 5S rRNA and the P site tRNA. Forms a bridge to the 30S subunit in the 70S ribosome.

This is one of the proteins that bind and probably mediate the attachment of the 5S RNA into the large ribosomal subunit, where it forms part of the central protuberance. In the 70S ribosome it contacts protein S13 of the 30S subunit (bridge B1b), connecting the 2 subunits; this bridge is implicated in subunit movement. Contacts the P site tRNA; the 5S rRNA and some of its associated proteins might help stabilize positioning of ribosome-bound tRNAs. The protein is Large ribosomal subunit protein uL5 of Cupriavidus necator (strain ATCC 17699 / DSM 428 / KCTC 22496 / NCIMB 10442 / H16 / Stanier 337) (Ralstonia eutropha).